A 260-amino-acid polypeptide reads, in one-letter code: Large ribosomal subunit protein eL8A (260 aa).

The tract at residues 1–34 is disordered; it reads MPSSKKVAPAPLATKSKASTSTKNPLFESTPKNF.

The protein belongs to the eukaryotic ribosomal protein eL8 family. As to quaternary structure, component of the large ribosomal subunit. Mature ribosomes consist of a small (40S) and a large (60S) subunit. The 40S subunit contains about 32 different proteins and 1 molecule of RNA (18S). The 60S subunit contains 45 different proteins and 3 molecules of RNA (25S, 5.8S and 5S).

The protein resides in the cytoplasm. Functionally, component of the ribosome, a large ribonucleoprotein complex responsible for the synthesis of proteins in the cell. The small ribosomal subunit (SSU) binds messenger RNAs (mRNAs) and translates the encoded message by selecting cognate aminoacyl-transfer RNA (tRNA) molecules. The large subunit (LSU) contains the ribosomal catalytic site termed the peptidyl transferase center (PTC), which catalyzes the formation of peptide bonds, thereby polymerizing the amino acids delivered by tRNAs into a polypeptide chain. The nascent polypeptides leave the ribosome through a tunnel in the LSU and interact with protein factors that function in enzymatic processing, targeting, and the membrane insertion of nascent chains at the exit of the ribosomal tunnel. The chain is Large ribosomal subunit protein eL8A from Candida albicans (strain SC5314 / ATCC MYA-2876) (Yeast).